Reading from the N-terminus, the 144-residue chain is Peptidyl-Asp metalloendopeptidase (144 aa).

H64 contacts Zn(2+). E65 is a catalytic residue. H68 lines the Zn(2+) pocket.

Belongs to the peptidase M72 family. It depends on Zn(2+) as a cofactor.

The catalysed reaction is Cleavage of Xaa-|-Asp, Xaa-|-Glu and Xaa-|-cysteic acid bonds.. Metalloprotease, specifically cleaves on the N-terminal side of aspartyl, glutamyl and cysteic acid residues. This is Peptidyl-Asp metalloendopeptidase from Pseudomonas fragi.